Consider the following 242-residue polypeptide: Terpene cyclase dpchB (242 aa).

7 helical membrane passes run 16-36, 51-71, 78-95, 114-134, 141-161, 169-189, and 207-227; these read VVWIADTCKLIMGIGWTANYV, ALLPLCCNFAWELTYAIMYAF, YVHFSGLLLNCGVMYTAV, LIFVLAVAGFASAHVVLAKQV, AWSAYACQLLLSVGGLCQLLC, SYFLWFSRFFGSLVLVPQDII, and IWFVTIFLILDGSYGLCLWYV.

Belongs to the paxB family.

It is found in the membrane. The protein operates within secondary metabolite biosynthesis; terpenoid biosynthesis. Its function is as follows. Terpene cyclase; part of the gene cluster that mediates the biosynthesis of the diterpenoid pyrones higginsianins A and B. The first step of the pathway is the synthesis of the alpha-pyrone moiety by the polyketide synthase dpchA via condensation of one acetyl-CoA starter unit with 3 malonyl-CoA units and 2 methylations. The alpha-pyrone is then combined with geranylgeranyl pyrophosphate (GGPP) formed by the GGPP synthase dpchD through the action of the prenyltransferase dpchC to yield a linear alpha-pyrone diterpenoid. Subsequent steps in the diterpenoid pyrone biosynthetic pathway involve the decalin core formation, which is initiated by the epoxidation of the C10-C11 olefin by the FAD-dependent oxidoreductase dpchE, and is followed by a cyclization cascade catalyzed by the terpene cyclase dpchB. The short chain dehydrogenase/reductase dpchG then oxidizes the 8S hydroxy group to a ketone and the short chain dehydrogenase/reductase dpchH reduces the ketone to the 8R hydroxy group to yield higginsianin B. Finally, the FAD-dependent oxidoreductase dpchF converts higginsianin B into higginsianin A. In Colletotrichum higginsianum (strain IMI 349063) (Crucifer anthracnose fungus), this protein is Terpene cyclase dpchB.